A 222-amino-acid chain; its full sequence is 2-C-methyl-D-erythritol 4-phosphate cytidylyltransferase (222 aa).

It belongs to the IspD/TarI cytidylyltransferase family. IspD subfamily.

It catalyses the reaction 2-C-methyl-D-erythritol 4-phosphate + CTP + H(+) = 4-CDP-2-C-methyl-D-erythritol + diphosphate. It participates in isoprenoid biosynthesis; isopentenyl diphosphate biosynthesis via DXP pathway; isopentenyl diphosphate from 1-deoxy-D-xylulose 5-phosphate: step 2/6. Its function is as follows. Catalyzes the formation of 4-diphosphocytidyl-2-C-methyl-D-erythritol from CTP and 2-C-methyl-D-erythritol 4-phosphate (MEP). The polypeptide is 2-C-methyl-D-erythritol 4-phosphate cytidylyltransferase (Thermotoga maritima (strain ATCC 43589 / DSM 3109 / JCM 10099 / NBRC 100826 / MSB8)).